A 174-amino-acid chain; its full sequence is Shikimate kinase 2 (174 aa).

12-17 is a binding site for ATP; that stretch reads GAGKTT. Residues Thr-16 and Asp-32 each coordinate Mg(2+). Residues Asp-34, Arg-58, and Gly-79 each contribute to the substrate site. Residues 112-126 form an LID domain region; sequence EEYPQDTQRPTLTGR. Residue Arg-120 coordinates ATP. Arg-139 provides a ligand contact to substrate.

It belongs to the shikimate kinase family. AroL subfamily. Monomer. Mg(2+) serves as cofactor.

It localises to the cytoplasm. The catalysed reaction is shikimate + ATP = 3-phosphoshikimate + ADP + H(+). It participates in metabolic intermediate biosynthesis; chorismate biosynthesis; chorismate from D-erythrose 4-phosphate and phosphoenolpyruvate: step 5/7. Functionally, catalyzes the specific phosphorylation of the 3-hydroxyl group of shikimic acid using ATP as a cosubstrate. The chain is Shikimate kinase 2 from Serratia proteamaculans (strain 568).